A 769-amino-acid polypeptide reads, in one-letter code: Polyribonucleotide nucleotidyltransferase (769 aa).

Asp490 and Asp496 together coordinate Mg(2+). Residues 557–616 form the KH domain; that stretch reads PKIDTIMIPVDKIKVVIGKGGEQIDKIIAETGVKIDIDDEGLCSIFSSDQSAIDRAKEII. One can recognise an S1 motif domain in the interval 626–694; it reads GEVYEAKVVR…DKGRVDASMR (69 aa). The segment covering 700–734 has biased composition (basic and acidic residues); the sequence is PEGYVEPERKPRERRDNKDRRNGNGFDRRNNDRNN. Residues 700–769 form a disordered region; the sequence is PEGYVEPERK…FPELSTKKPE (70 aa). The segment covering 736-746 has biased composition (low complexity); it reads NNHNNNSGNHS. A compositionally biased stretch (basic and acidic residues) spans 747–769; sequence FELRERKSHVDHEFPELSTKKPE.

Belongs to the polyribonucleotide nucleotidyltransferase family. Requires Mg(2+) as cofactor.

The protein localises to the cytoplasm. The enzyme catalyses RNA(n+1) + phosphate = RNA(n) + a ribonucleoside 5'-diphosphate. In terms of biological role, involved in mRNA degradation. Catalyzes the phosphorolysis of single-stranded polyribonucleotides processively in the 3'- to 5'-direction. The protein is Polyribonucleotide nucleotidyltransferase of Lactococcus lactis subsp. cremoris (strain SK11).